The following is a 150-amino-acid chain: MTLQLNTIALLLVILLILGVLSNNSAITISAAVLLIMQQTFLSSHIPLLEKYGVKIGIIILTIGVLSPLVSGKIQLPDLSGFLSWKMALSIAVGVLVAWLAGKGVPLMGEQPILVTGLLIGTIIGVAFLGGIPVGPLIAAGILALLLGKI.

Helical transmembrane passes span 1 to 21 (MTLQ…LGVL), 52 to 72 (YGVK…LVSG), 81 to 101 (GFLS…AWLA), and 123 to 143 (IIGV…AGIL).

Belongs to the UPF0756 family.

It localises to the cell membrane. The sequence is that of UPF0756 membrane protein NTHI1233 from Haemophilus influenzae (strain 86-028NP).